Here is a 419-residue protein sequence, read N- to C-terminus: Menaquinone reductase, integral membrane subunit (419 aa).

10 consecutive transmembrane segments (helical) span residues 23 to 43 (LSKF…GLYA), 61 to 81 (FGFG…AGAF), 98 to 118 (IINL…LVLV), 143 to 163 (VIFC…PLIL), 176 to 196 (AVAH…AFLS), 221 to 241 (FFIW…SGPV), 270 to 290 (IAGT…YAWA), 316 to 336 (LWAE…VPAL), 341 to 361 (VLFY…RYVM), and 383 to 403 (WAEW…LSLS).

It belongs to the NrfD family. The Qrc complex is composed of four subunits: QrcA, QrcB, QrcC and QrcD. Can form a supercomplex with the [NiFe] hydrogenase HynA1 and the tetraheme Type I cytochrome c3 TpIc(3), its physiological electron donors.

It localises to the cell inner membrane. In terms of biological role, component of the respiratory Qrc complex, that catalyzes the reduction of the menaquinone pool using electrons transferred from the reduced periplasmic cytochrome c3, and which is probably involved in sulfate respiration. Is likely essential for growth on H(2) or formate since the periplasmic hydrogenases and/or formate dehydrogenases act as primary electron donors for the Qrc complex. The QrcD subunit anchors the protein complex to the membrane and likely interacts with the quinone pool. The sequence is that of Menaquinone reductase, integral membrane subunit from Nitratidesulfovibrio vulgaris (strain ATCC 29579 / DSM 644 / CCUG 34227 / NCIMB 8303 / VKM B-1760 / Hildenborough) (Desulfovibrio vulgaris).